Here is a 199-residue protein sequence, read N- to C-terminus: MNYYSASISQLIEEFTKLPGIGRKTAQRLAFHVINMPIQDAHNLADAIVKAKENIKYCKVCTNLTDQEVCNICSDERRDPLLICVVEDPRDVVAMERTKEFKGYYHVLHGAISPLEGIGPEDIKIKELLVRLSAQSADEVIIATNPNIEGEATAMYLSKLLKPMGIKVSRIAHGIPVGGDLEYADEVTLTKALEGRREI.

The C4-type zinc finger occupies 58–73; that stretch reads CKVCTNLTDQEVCNIC. Residues 81 to 176 form the Toprim domain; the sequence is LLICVVEDPR…KVSRIAHGIP (96 aa).

The protein belongs to the RecR family.

May play a role in DNA repair. It seems to be involved in an RecBC-independent recombinational process of DNA repair. It may act with RecF and RecO. The sequence is that of Recombination protein RecR from Alkaliphilus oremlandii (strain OhILAs) (Clostridium oremlandii (strain OhILAs)).